A 606-amino-acid chain; its full sequence is Preterminal protein (606 aa).

The short motif at 320 to 329 (RLPVRRRRRR) is the Nuclear localization signal element. Ser-515 is subject to O-(5'-phospho-DNA)-serine. A disordered region spans residues 573-606 (HLPLPERQADIPLPPLPAGPEPPLPPGARPRRRF). A compositionally biased stretch (pro residues) spans 584-600 (PLPPLPAGPEPPLPPGA).

This sequence belongs to the adenoviridae terminal protein family. Heterodimer with the polymerase; this heterodimer binds to bp 9 to 18 of the genome. Interacts with host POU2F1; POU2F1 binds to the auxiliary sequences in the inverted terminal repeats and tethers the pTP-POL heterodimer to the origin DNA thereby participating in the assembly of the pre-initiation complex (POL-TP-DBP-NFIA-POU2F1). In terms of processing, preterminal protein is used to replicate viral genome, upon genomic encapsidation it is processed first into iTP and finally into TP by adenovirus protease.

It is found in the host nucleus matrix. Functionally, protein covalently bound to the viral DNA that acts as a primer for viral genomic replication by DNA strand displacement. Assembles on the viral origin of replication in an initiation complex with viral polymerase, DBP, host NFIA and host POU2F1/OCT1. During initiation, the polymerase covalently couples the first dCTP with Ser-580 of pTP. The terminal protein stimulates the template activity over 20 fold compared to protein-free templates. Neo-synthesized viral genomes are linked to two preterminal proteins, one for each 5' end. These new genomes are encapsidated in the nucleus, and during capsid maturation by viral protease, preterminal protein is first cleaved into intermediary (iTP), then into mature TP. May play a role in host nuclear matrix localization of genomic DNA. This is Preterminal protein from Human adenovirus A serotype 12 (HAdV-12).